Here is a 131-residue protein sequence, read N- to C-terminus: Small ribosomal subunit protein uS8 (131 aa).

The protein belongs to the universal ribosomal protein uS8 family. In terms of assembly, part of the 30S ribosomal subunit. Contacts proteins S5 and S12.

One of the primary rRNA binding proteins, it binds directly to 16S rRNA central domain where it helps coordinate assembly of the platform of the 30S subunit. The polypeptide is Small ribosomal subunit protein uS8 (Campylobacter fetus subsp. fetus (strain 82-40)).